The following is a 259-amino-acid chain: Hydroxyethylthiazole kinase (259 aa).

Residue Met-38 participates in substrate binding. Residues Arg-113 and Ser-158 each contribute to the ATP site. Gly-185 contributes to the substrate binding site.

This sequence belongs to the Thz kinase family. Mg(2+) is required as a cofactor.

The catalysed reaction is 5-(2-hydroxyethyl)-4-methylthiazole + ATP = 4-methyl-5-(2-phosphooxyethyl)-thiazole + ADP + H(+). Its pathway is cofactor biosynthesis; thiamine diphosphate biosynthesis; 4-methyl-5-(2-phosphoethyl)-thiazole from 5-(2-hydroxyethyl)-4-methylthiazole: step 1/1. In terms of biological role, catalyzes the phosphorylation of the hydroxyl group of 4-methyl-5-beta-hydroxyethylthiazole (THZ). In Leuconostoc citreum (strain KM20), this protein is Hydroxyethylthiazole kinase.